Reading from the N-terminus, the 356-residue chain is Histidinol-phosphate aminotransferase (356 aa).

Residue Lys-213 is modified to N6-(pyridoxal phosphate)lysine.

Belongs to the class-II pyridoxal-phosphate-dependent aminotransferase family. Histidinol-phosphate aminotransferase subfamily. As to quaternary structure, homodimer. The cofactor is pyridoxal 5'-phosphate.

The enzyme catalyses L-histidinol phosphate + 2-oxoglutarate = 3-(imidazol-4-yl)-2-oxopropyl phosphate + L-glutamate. It functions in the pathway amino-acid biosynthesis; L-histidine biosynthesis; L-histidine from 5-phospho-alpha-D-ribose 1-diphosphate: step 7/9. The sequence is that of Histidinol-phosphate aminotransferase from Clostridium novyi (strain NT).